The following is a 355-amino-acid chain: Glucose-6-phosphatase 2 (355 aa).

Residues M1–G24 lie on the Lumenal side of the membrane. The chain crosses the membrane as a helical span at residues F25 to L45. At W46–K56 the chain is on the cytoplasmic side. The chain crosses the membrane as a helical span at residues M57 to G77. Residues H78–H115 are Lumenal-facing. R79 contributes to the substrate binding site. N92 carries an N-linked (GlcNAc...) asparagine glycan. H115 serves as the catalytic Proton donor. The chain crosses the membrane as a helical span at residues A116–S136. The Cytoplasmic portion of the chain corresponds to R137–H146. Residues R147–S167 traverse the membrane as a helical segment. Residue R168 is a topological domain, lumenal. R168 contributes to the substrate binding site. A helical membrane pass occupies residues V169–V189. The active-site Nucleophile is the H174. Residues A190–N211 lie on the Cytoplasmic side of the membrane. A helical membrane pass occupies residues V212–L232. At L233–D252 the chain is on the lumenal side. A helical transmembrane segment spans residues S253 to I273. The Cytoplasmic portion of the chain corresponds to N274–P290. Residues S291–Y307 form a helical membrane-spanning segment. Residues R308–P318 lie on the Lumenal side of the membrane. A helical transmembrane segment spans residues L319–I339. Topologically, residues P340–K355 are cytoplasmic. The Prevents secretion from ER motif lies at K352–K355.

It belongs to the glucose-6-phosphatase family. N-glycosylated; the non-glycosylated form is more unstable and is degraded through the proteasome. As to expression, specifically expressed in pancreatic islet cells, in particular those of beta-cell origin. Not detected in testis, kidney, muscle, liver, lung, spleen, brain, pituitary, gastric fundus or heart.

It localises to the endoplasmic reticulum membrane. It carries out the reaction D-glucose 6-phosphate + H2O = D-glucose + phosphate. It functions in the pathway carbohydrate biosynthesis; gluconeogenesis. Its function is as follows. May hydrolyze glucose-6-phosphate to glucose in the endoplasmic reticulum. May be responsible for glucose production through glycogenolysis and gluconeogenesis. The protein is Glucose-6-phosphatase 2 (G6pc2) of Mus musculus (Mouse).